The sequence spans 261 residues: Cytochrome c oxidase subunit 3 (261 aa).

Topologically, residues 1 to 15 (MTHQTHAYHMVNPSP) are mitochondrial matrix. Residues 16 to 34 (WPLTGALSALLMSSGLTMW) form a helical membrane-spanning segment. Topologically, residues 35–40 (FHFNSL) are mitochondrial intermembrane. The chain crosses the membrane as a helical span at residues 41–66 (ILLTTGLVTNILTMYQWWRDVIREST). At 67–72 (FQGHHT) the chain is on the mitochondrial matrix side. Residues 73–105 (PVVQKGLRYGMVLFIISEVLFFTGFFWAFYHSS) traverse the membrane as a helical segment. The Mitochondrial intermembrane segment spans residues 106 to 128 (LAPTPELGGCWPPTGINPLNPLE). Residues 129-152 (VPLLNTSVLLASGVSITWAHHSLM) traverse the membrane as a helical segment. At 153–155 (EGN) the chain is on the mitochondrial matrix side. Residues 156–183 (RKQMLQALFITIALGVYFTLLQASEYHE) traverse the membrane as a helical segment. The Mitochondrial intermembrane portion of the chain corresponds to 184–190 (ASFTISD). Residues 191 to 223 (GVYGSTFFVATGFHGLHVIIGSTFLIVCFLRQL) traverse the membrane as a helical segment. The Mitochondrial matrix segment spans residues 224 to 232 (KFHFTSDHH). A helical membrane pass occupies residues 233–256 (FGFEAAAWYWHFVDVVWLFLYVSI). The Mitochondrial intermembrane segment spans residues 257-261 (YWWGS).

The protein belongs to the cytochrome c oxidase subunit 3 family. As to quaternary structure, component of the cytochrome c oxidase (complex IV, CIV), a multisubunit enzyme composed of 14 subunits. The complex is composed of a catalytic core of 3 subunits MT-CO1, MT-CO2 and MT-CO3, encoded in the mitochondrial DNA, and 11 supernumerary subunits COX4I, COX5A, COX5B, COX6A, COX6B, COX6C, COX7A, COX7B, COX7C, COX8 and NDUFA4, which are encoded in the nuclear genome. The complex exists as a monomer or a dimer and forms supercomplexes (SCs) in the inner mitochondrial membrane with NADH-ubiquinone oxidoreductase (complex I, CI) and ubiquinol-cytochrome c oxidoreductase (cytochrome b-c1 complex, complex III, CIII), resulting in different assemblies (supercomplex SCI(1)III(2)IV(1) and megacomplex MCI(2)III(2)IV(2)).

The protein localises to the mitochondrion inner membrane. The catalysed reaction is 4 Fe(II)-[cytochrome c] + O2 + 8 H(+)(in) = 4 Fe(III)-[cytochrome c] + 2 H2O + 4 H(+)(out). In terms of biological role, component of the cytochrome c oxidase, the last enzyme in the mitochondrial electron transport chain which drives oxidative phosphorylation. The respiratory chain contains 3 multisubunit complexes succinate dehydrogenase (complex II, CII), ubiquinol-cytochrome c oxidoreductase (cytochrome b-c1 complex, complex III, CIII) and cytochrome c oxidase (complex IV, CIV), that cooperate to transfer electrons derived from NADH and succinate to molecular oxygen, creating an electrochemical gradient over the inner membrane that drives transmembrane transport and the ATP synthase. Cytochrome c oxidase is the component of the respiratory chain that catalyzes the reduction of oxygen to water. Electrons originating from reduced cytochrome c in the intermembrane space (IMS) are transferred via the dinuclear copper A center (CU(A)) of subunit 2 and heme A of subunit 1 to the active site in subunit 1, a binuclear center (BNC) formed by heme A3 and copper B (CU(B)). The BNC reduces molecular oxygen to 2 water molecules using 4 electrons from cytochrome c in the IMS and 4 protons from the mitochondrial matrix. The chain is Cytochrome c oxidase subunit 3 (MT-CO3) from Hippopotamus amphibius (Hippopotamus).